The primary structure comprises 468 residues: Hydroxymethylglutaryl-CoA lyase, mitochondrial (468 aa).

One can recognise a Pyruvate carboxyltransferase domain in the interval 168–435 (VKIVEVGPRD…HTNVDLGKLI (268 aa)). Arginine 176 is a binding site for substrate. A divalent metal cation contacts are provided by aspartate 177, histidine 368, and histidine 370. The active site involves cysteine 401. A divalent metal cation is bound at residue asparagine 410.

Belongs to the HMG-CoA lyase family. Homodimer. The cofactor is a divalent metal cation.

The protein localises to the mitochondrion matrix. It catalyses the reaction (3S)-3-hydroxy-3-methylglutaryl-CoA = acetoacetate + acetyl-CoA. It functions in the pathway metabolic intermediate metabolism; (S)-3-hydroxy-3-methylglutaryl-CoA degradation; acetoacetate from (S)-3-hydroxy-3-methylglutaryl-CoA: step 1/1. Its function is as follows. Involved in the catabolism of branched amino acids such as leucine. This chain is Hydroxymethylglutaryl-CoA lyase, mitochondrial (HMGCL), found in Arabidopsis thaliana (Mouse-ear cress).